We begin with the raw amino-acid sequence, 888 residues long: DNA mismatch repair protein MutS (888 aa).

Residue 641–648 (GPNMAGKS) participates in ATP binding.

The protein belongs to the DNA mismatch repair MutS family.

This protein is involved in the repair of mismatches in DNA. It is possible that it carries out the mismatch recognition step. This protein has a weak ATPase activity. This chain is DNA mismatch repair protein MutS, found in Rickettsia bellii (strain OSU 85-389).